A 588-amino-acid polypeptide reads, in one-letter code: Aspartate--tRNA ligase (588 aa).

Glutamate 177 is an L-aspartate binding site. The tract at residues 201-204 (QLFK) is aspartate. Arginine 223 contributes to the L-aspartate binding site. ATP is bound by residues 223-225 (RDE) and glutamine 232. Position 451 (histidine 451) interacts with L-aspartate. ATP is bound at residue glutamate 485. Position 492 (arginine 492) interacts with L-aspartate. 537 to 540 (GLDR) is a binding site for ATP.

This sequence belongs to the class-II aminoacyl-tRNA synthetase family. Type 1 subfamily. As to quaternary structure, homodimer.

It is found in the cytoplasm. The enzyme catalyses tRNA(Asp) + L-aspartate + ATP = L-aspartyl-tRNA(Asp) + AMP + diphosphate. Its function is as follows. Catalyzes the attachment of L-aspartate to tRNA(Asp) in a two-step reaction: L-aspartate is first activated by ATP to form Asp-AMP and then transferred to the acceptor end of tRNA(Asp). The sequence is that of Aspartate--tRNA ligase from Staphylococcus epidermidis (strain ATCC 35984 / DSM 28319 / BCRC 17069 / CCUG 31568 / BM 3577 / RP62A).